The primary structure comprises 374 residues: MPGQSVGAVQPQRAHFDQPLHLRSGGVLPAYDLVYETYGTLNAAKSNAILVCHALSGHHHVAGHYADQPDNIGWWDNIVGPGRPLDTDKFFIVGLNNLGGCHGSTGPSSLNPATGKPWGADFPIVAVNDWVHAQARLADLLGIDSWAAVMGGSLGGMQALRWSITFPERVRNAIVIAAAPKLSAQNIAFNDVARQAILTDPDFHGGHYYEHNTRPVRGLRLARMLGHITYLSDDQMGEKFGRELRNSAFSFGYGVEFEVESYLRYQGDKFAGYFDANTYLLMTKALDYFDPSREDDGNLTATMARTQANFLIASFTTDWRFTPARSKEIVAALLANGRNVSYAEIDLNFGHDSFLMEDAHYHGVVDAYLRNIKL.

In terms of domain architecture, AB hydrolase-1 spans 47-357; that stretch reads NAILVCHALS…NFGHDSFLME (311 aa). Catalysis depends on Ser-153, which acts as the Nucleophile. Arg-223 is a binding site for substrate. Catalysis depends on residues Asp-318 and His-351. Asp-352 is a binding site for substrate.

This sequence belongs to the AB hydrolase superfamily. MetX family. As to quaternary structure, homodimer.

The protein resides in the cytoplasm. It catalyses the reaction L-homoserine + succinyl-CoA = O-succinyl-L-homoserine + CoA. Its pathway is amino-acid biosynthesis; L-methionine biosynthesis via de novo pathway; O-succinyl-L-homoserine from L-homoserine: step 1/1. Transfers a succinyl group from succinyl-CoA to L-homoserine, forming succinyl-L-homoserine. The chain is Homoserine O-succinyltransferase from Dechloromonas aromatica (strain RCB).